The chain runs to 119 residues: Probable non-functional T cell receptor gamma variable 11 (119 aa).

The N-terminal stretch at 1 to 18 (MPLVVAVIFFSLWVFALG) is a signal peptide. An Ig-like domain is found at 23–119 (PEISISRPAN…VYHCACWIRH (97 aa)). An N-linked (GlcNAc...) asparagine glycan is attached at Asn-32.

Most probably, the gamma-delta TR is not assembled due to incorrect folding of the gamma chain. Gamma-delta TR is a heterodimer composed of a gamma and delta chain; disulfide-linked. The gamma-delta TR is associated with the transmembrane signaling CD3 coreceptor proteins following the stoichiometry: a single gamma-delta TR heterodimer associates with one CD3D-CD3E heterodimer, one CD3G-CD3E heterodimer and one CD247 homodimer forming a stable octameric structure. Upon activation, gamma-delta TR complex associates with FCER1G to initiate intracellular signaling.

It is found in the cell membrane. Functionally, probable non-functional open reading frame (ORF) of V region of the variable domain of T cell receptor (TR) gamma chain. Non-functional ORF generally cannot participate in the synthesis of a productive T cell receptor (TR) chain due to altered V-(D)-J or switch recombination and/or splicing site (at mRNA level) and/or conserved amino acid change (protein level). Gamma-delta TRs recognize a variety of self and foreign non-peptide antigens frequently expressed at the epithelial boundaries between the host and external environment, including endogenous lipids presented by MH-like protein CD1D and phosphoantigens presented by butyrophilin-like molecule BTN3A1. Upon antigen recognition induces rapid, innate-like immune responses involved in pathogen clearance and tissue repair. Binding of gamma-delta TR complex to antigen triggers phosphorylation of immunoreceptor tyrosine-based activation motifs (ITAMs) in the CD3 chains by the LCK and FYN kinases, allowing the recruitment, phosphorylation, and activation of ZAP70 that facilitates phosphorylation of the scaffolding proteins LCP2 and LAT. This lead to the formation of a supramolecular signalosome that recruits the phospholipase PLCG1, resulting in calcium mobilization and ERK activation, ultimately leading to T cell expansion and differentiation into effector cells. Gamma-delta TRs are produced through somatic rearrangement of a limited repertoire of variable (V), diversity (D), and joining (J) genes. The potential diversity of gamma-delta TRs is conferred by the unique ability to rearrange (D) genes in tandem and to utilize all three reading frames. The combinatorial diversity is considerably increased by the sequence exonuclease trimming and random nucleotide (N) region additions which occur during the V-(D)-J rearrangements. The sequence is that of Probable non-functional T cell receptor gamma variable 11 from Homo sapiens (Human).